The chain runs to 148 residues: UPF0756 membrane protein NMC1845 (148 aa).

The next 4 helical transmembrane spans lie at 13–35 (LILL…LLLM), 50–70 (HGLN…LVSG), 80–100 (FLNF…WLAG), and 121–141 (VIGV…AGIL).

The protein belongs to the UPF0756 family.

The protein localises to the cell membrane. In Neisseria meningitidis serogroup C / serotype 2a (strain ATCC 700532 / DSM 15464 / FAM18), this protein is UPF0756 membrane protein NMC1845.